The primary structure comprises 333 residues: Transcription initiation factor IIB (333 aa).

A TFIIB-type zinc finger spans residues 33 to 64; sequence EVYRCPICGNDRFVYNYERGEIVCIVCGAVVQ. The Zn(2+) site is built by Cys-37, Cys-40, Cys-56, and Cys-59. Repeat copies occupy residues 149–232 and 243–324.

This sequence belongs to the TFIIB family.

In terms of biological role, stabilizes TBP binding to an archaeal box-A promoter. Also responsible for recruiting RNA polymerase II to the pre-initiation complex (DNA-TBP-TFIIB). This chain is Transcription initiation factor IIB, found in Pyrobaculum islandicum (strain DSM 4184 / JCM 9189 / GEO3).